The following is a 1240-amino-acid chain: ATP-dependent helicase/nuclease subunit A (1240 aa).

The 474-residue stretch at 12-485 folds into the UvrD-like helicase ATP-binding domain; it reads SQWTDDQWKA…IDLAKNFRSR (474 aa). Residue 33–40 coordinates ATP; the sequence is AAAGSGKT. A UvrD-like helicase C-terminal domain is found at 497–804; sequence KQIMGEEVGE…RIMTIHKSKG (308 aa).

It belongs to the helicase family. AddA subfamily. In terms of assembly, heterodimer of AddA and AddB/RexB. Requires Mg(2+) as cofactor.

The catalysed reaction is Couples ATP hydrolysis with the unwinding of duplex DNA by translocating in the 3'-5' direction.. It catalyses the reaction ATP + H2O = ADP + phosphate + H(+). The heterodimer acts as both an ATP-dependent DNA helicase and an ATP-dependent, dual-direction single-stranded exonuclease. Recognizes the chi site generating a DNA molecule suitable for the initiation of homologous recombination. The AddA nuclease domain is required for chi fragment generation; this subunit has the helicase and 3' -&gt; 5' nuclease activities. This is ATP-dependent helicase/nuclease subunit A from Bacillus cereus (strain AH820).